Reading from the N-terminus, the 545-residue chain is CTP synthase (545 aa).

The tract at residues 1–266 is amidoligase domain; that stretch reads MTTRYIFVTG…DDLVVKRFGL (266 aa). Ser-14 lines the CTP pocket. A UTP-binding site is contributed by Ser-14. Residues 15–20 and Asp-72 contribute to the ATP site; that span reads SLGKGI. Residues Asp-72 and Glu-140 each contribute to the Mg(2+) site. Residues 147-149, 187-192, and Lys-223 each bind CTP; these read DIE and KTKPTQ. UTP contacts are provided by residues 187–192 and Lys-223; that span reads KTKPTQ. 239 to 241 provides a ligand contact to ATP; it reads KDV. Residues 291-542 form the Glutamine amidotransferase type-1 domain; it reads VIGMVGKYIE…IAAASAHQKR (252 aa). Position 352 (Gly-352) interacts with L-glutamine. Cys-379 (nucleophile; for glutamine hydrolysis) is an active-site residue. L-glutamine contacts are provided by residues 380–383, Glu-403, and Arg-470; that span reads LGMQ. Residues His-515 and Glu-517 contribute to the active site.

This sequence belongs to the CTP synthase family. As to quaternary structure, homotetramer.

The enzyme catalyses UTP + L-glutamine + ATP + H2O = CTP + L-glutamate + ADP + phosphate + 2 H(+). It catalyses the reaction L-glutamine + H2O = L-glutamate + NH4(+). The catalysed reaction is UTP + NH4(+) + ATP = CTP + ADP + phosphate + 2 H(+). It participates in pyrimidine metabolism; CTP biosynthesis via de novo pathway; CTP from UDP: step 2/2. With respect to regulation, allosterically activated by GTP, when glutamine is the substrate; GTP has no effect on the reaction when ammonia is the substrate. The allosteric effector GTP functions by stabilizing the protein conformation that binds the tetrahedral intermediate(s) formed during glutamine hydrolysis. Inhibited by the product CTP, via allosteric rather than competitive inhibition. In terms of biological role, catalyzes the ATP-dependent amination of UTP to CTP with either L-glutamine or ammonia as the source of nitrogen. Regulates intracellular CTP levels through interactions with the four ribonucleotide triphosphates. This is CTP synthase from Shewanella putrefaciens (strain CN-32 / ATCC BAA-453).